We begin with the raw amino-acid sequence, 105 residues long: MAAKIKKGDKVVVLVGRDKGRSGEVLQVIPKEDRALVRGVNLVKRHQRQTAQQEAGIVSKEAAIQLSNLAVADPKDGKPTRVGFKVLEDGRKVRFAKRSGDVIDG.

This sequence belongs to the universal ribosomal protein uL24 family. Part of the 50S ribosomal subunit.

Functionally, one of two assembly initiator proteins, it binds directly to the 5'-end of the 23S rRNA, where it nucleates assembly of the 50S subunit. Its function is as follows. One of the proteins that surrounds the polypeptide exit tunnel on the outside of the subunit. The sequence is that of Large ribosomal subunit protein uL24 from Methylocella silvestris (strain DSM 15510 / CIP 108128 / LMG 27833 / NCIMB 13906 / BL2).